Consider the following 229-residue polypeptide: Auxin-responsive protein IAA17 (229 aa).

The short motif at 14-18 (LCLGL) is the EAR-like (transcriptional repression) element. Positions 110–211 (AAFVKVSMDG…TCKRLRLMKG (102 aa)) constitute a PB1 domain.

This sequence belongs to the Aux/IAA family. As to quaternary structure, homodimers and heterodimers. Interacts with the auxin response factors ARF1 and IAA24. Interacts with IAA1. Interacts with TPL. Interacts (via PB1 domain) with ARF7 (via PB1 domain). Post-translationally, phosphorylated by phytochrome A in vitro.

It localises to the nucleus. Functionally, aux/IAA proteins are short-lived transcriptional factors that function as repressors of early auxin response genes at low auxin concentrations. Repression is thought to result from the interaction with auxin response factors (ARFs), proteins that bind to the auxin-responsive promoter element (AuxRE). Formation of heterodimers with ARF proteins may alter their ability to modulate early auxin response genes expression. The sequence is that of Auxin-responsive protein IAA17 (IAA17) from Arabidopsis thaliana (Mouse-ear cress).